The sequence spans 77 residues: Large ribosomal subunit protein uL24 (77 aa).

The segment at 42 to 61 is disordered; it reads KKHQKPSQTNANGGVVESEG.

Belongs to the universal ribosomal protein uL24 family. As to quaternary structure, part of the 50S ribosomal subunit.

Functionally, one of two assembly initiator proteins, it binds directly to the 5'-end of the 23S rRNA, where it nucleates assembly of the 50S subunit. One of the proteins that surrounds the polypeptide exit tunnel on the outside of the subunit. The chain is Large ribosomal subunit protein uL24 from Lactobacillus helveticus (strain DPC 4571).